The sequence spans 286 residues: ATP synthase gamma chain (286 aa).

The protein belongs to the ATPase gamma chain family. In terms of assembly, F-type ATPases have 2 components, CF(1) - the catalytic core - and CF(0) - the membrane proton channel. CF(1) has five subunits: alpha(3), beta(3), gamma(1), delta(1), epsilon(1). CF(0) has three main subunits: a, b and c.

The protein localises to the cell membrane. In terms of biological role, produces ATP from ADP in the presence of a proton gradient across the membrane. The gamma chain is believed to be important in regulating ATPase activity and the flow of protons through the CF(0) complex. The chain is ATP synthase gamma chain from Oceanobacillus iheyensis (strain DSM 14371 / CIP 107618 / JCM 11309 / KCTC 3954 / HTE831).